The primary structure comprises 168 residues: uncharacterized protein (168 aa).

The HTH asnC-type domain maps to 19-80 (LDKLDRHILN…VVSPKAVGRT (62 aa)). The segment at residues 38-57 (LKELSEKVNSSVATCQRRVQ) is a DNA-binding region (H-T-H motif).

This is an uncharacterized protein from Haemophilus influenzae (strain ATCC 51907 / DSM 11121 / KW20 / Rd).